The chain runs to 66 residues: Large ribosomal subunit protein bL31 (66 aa).

Residues cysteine 16, cysteine 18, cysteine 36, and cysteine 39 each coordinate Zn(2+).

Belongs to the bacterial ribosomal protein bL31 family. Type A subfamily. Part of the 50S ribosomal subunit during exponential growth. Zn(2+) is required as a cofactor.

Functionally, binds the 23S rRNA. While neither of the L31 paralogs is essential, this protein seems to function as the main L31 protein. Has a lower affinity for 70S ribosomes than the non-zinc-containing paralog L31B (ytiA); is displaced by it to varying extents, even under zinc-replete conditions. The polypeptide is Large ribosomal subunit protein bL31 (rpmE) (Bacillus subtilis (strain 168)).